We begin with the raw amino-acid sequence, 85 residues long: UPF0386 protein RHECIAT_CH0001945 (85 aa).

Belongs to the UPF0386 family.

The sequence is that of UPF0386 protein RHECIAT_CH0001945 from Rhizobium etli (strain CIAT 652).